Reading from the N-terminus, the 301-residue chain is Probable alpha-L-glutamate ligase 2 (301 aa).

Residues 104 to 287 enclose the ATP-grasp domain; sequence MQLLSRKGIG…VASMIIEFIV (184 aa). ATP is bound by residues Lys141, 178–179, Asp187, and 211–213; these read EY and RSN. Asp248, Glu260, and Asn262 together coordinate Mg(2+). Mn(2+) contacts are provided by Asp248, Glu260, and Asn262.

Belongs to the RimK family. The cofactor is Mg(2+). It depends on Mn(2+) as a cofactor.

The protein is Probable alpha-L-glutamate ligase 2 of Pseudoalteromonas atlantica (strain T6c / ATCC BAA-1087).